The following is a 92-amino-acid chain: UPF0250 protein CGSHiEE_03170 (92 aa).

The protein belongs to the UPF0250 family.

This chain is UPF0250 protein CGSHiEE_03170, found in Haemophilus influenzae (strain PittEE).